A 488-amino-acid chain; its full sequence is Glutamyl-tRNA(Gln) amidotransferase subunit A (488 aa).

Active-site charge relay system residues include Lys-77 and Ser-152. Ser-176 (acyl-ester intermediate) is an active-site residue.

The protein belongs to the amidase family. GatA subfamily. As to quaternary structure, heterotrimer of A, B and C subunits.

It carries out the reaction L-glutamyl-tRNA(Gln) + L-glutamine + ATP + H2O = L-glutaminyl-tRNA(Gln) + L-glutamate + ADP + phosphate + H(+). Functionally, allows the formation of correctly charged Gln-tRNA(Gln) through the transamidation of misacylated Glu-tRNA(Gln) in organisms which lack glutaminyl-tRNA synthetase. The reaction takes place in the presence of glutamine and ATP through an activated gamma-phospho-Glu-tRNA(Gln). In Streptococcus pyogenes serotype M3 (strain ATCC BAA-595 / MGAS315), this protein is Glutamyl-tRNA(Gln) amidotransferase subunit A.